We begin with the raw amino-acid sequence, 219 residues long: Kappa-scoloptoxin(11)-Ss1a (219 aa).

The first 16 residues, 1–16 (MFYSHLLFFTFTFACS), serve as a signal peptide directing secretion. Residues 17 to 25 (SSLNRKTKR) constitute a propeptide that is removed on maturation.

Contains 8 disulfide bonds. In terms of tissue distribution, expressed by the venom gland.

The protein localises to the secreted. Functionally, voltage-gated potassium channel inhibitor. This is Kappa-scoloptoxin(11)-Ss1a from Scolopendra dehaani (Thai centipede).